The following is a 304-amino-acid chain: Sulfate adenylyltransferase subunit 2 (304 aa).

The protein belongs to the PAPS reductase family. CysD subfamily. As to quaternary structure, heterodimer composed of CysD, the smaller subunit, and CysN.

It carries out the reaction sulfate + ATP + H(+) = adenosine 5'-phosphosulfate + diphosphate. Its pathway is sulfur metabolism; hydrogen sulfide biosynthesis; sulfite from sulfate: step 1/3. Functionally, with CysN forms the ATP sulfurylase (ATPS) that catalyzes the adenylation of sulfate producing adenosine 5'-phosphosulfate (APS) and diphosphate, the first enzymatic step in sulfur assimilation pathway. APS synthesis involves the formation of a high-energy phosphoric-sulfuric acid anhydride bond driven by GTP hydrolysis by CysN coupled to ATP hydrolysis by CysD. The polypeptide is Sulfate adenylyltransferase subunit 2 (Acinetobacter baylyi (strain ATCC 33305 / BD413 / ADP1)).